A 235-amino-acid polypeptide reads, in one-letter code: MKNIKKNQVMNLGPNSKLLKEYKSQLIELNIEQFEAGIGLILGDAYIRSRDEGKTYCMQFEWKNKAYMDHVCLLYDQWVLSPPHKKERVNHLGNLVITWGAQTFKHQAFNKLANLFIVNNKKTIPNNLVENYLTPMSLAYWFMDDGGKWDYNKNSTNKSIVLNTQSFTFEEVEYLVKGLRNKFQLNCYVKINKNKPIIYIDSMSYLIFYNLIKPYLIPQMMYKLPNTISSETFLK.

Belongs to the LAGLIDADG endonuclease family. As to quaternary structure, monomer. Mg(2+) is required as a cofactor.

The protein localises to the mitochondrion. In terms of biological role, mitochondrial DNA endonuclease involved in intron homing. It introduces a specific double-strand break in the DNA of the 21S rRNA gene and thus mediates the insertion of an intron, containing its own coding sequence (group I intron), into an intronless gene. Specifically recognizes and cleaves the sequence 5'-TAGGGATAACAGGGTAAT-3'. This Saccharomyces cerevisiae (strain ATCC 204508 / S288c) (Baker's yeast) protein is Intron-encoded endonuclease I-SceI (SCEI).